The following is a 383-amino-acid chain: uncharacterized protein (383 aa).

Disordered stretches follow at residues 27–66 and 242–281; these read ENNN…NKKP and LITT…ITRR. Low complexity-rich tracts occupy residues 28 to 63 and 242 to 275; these read NNNT…NNNN and LITT…KSSS.

This is an uncharacterized protein from Dictyostelium discoideum (Social amoeba).